We begin with the raw amino-acid sequence, 376 residues long: Proton extrusion protein PxcA (376 aa).

4 helical membrane passes run 150 to 170 (TLISLKIILLLILVPLLVQQM), 251 to 271 (AVKNVLADIAALIAFAFVCII), 299 to 319 (IILFTDMFVGFHSPEGWQVLL), and 334 to 354 (FILLFIATFPVILATIFKYWI).

The protein belongs to the CemA family.

Its subcellular location is the cell inner membrane. Its function is as follows. Required for H(+) efflux immediately after light irradiation to form a rapid H(+) concentration gradient across the thylakoid membranes. Together with PxcL, contributes to transient H(+) uptake following dark to light transition. This chain is Proton extrusion protein PxcA, found in Prochlorococcus marinus (strain MIT 9303).